The chain runs to 547 residues: Solute carrier family 22 member 7 (547 aa).

The next 12 membrane-spanning stretches (helical) occupy residues 21-41 (VALL…PIFL), 145-165 (ATST…GYLS), 173-193 (LLLV…ASVS), 203-223 (LTGT…LEWL), 233-253 (VLSS…GYLI), 258-278 (WLLL…WWVP), 345-365 (ISLC…GLSL), 374-396 (VYQT…YLSV), 403-423 (LTLA…LLVS), 431-451 (TALA…AYLF), 465-485 (MGLT…AALL), and 492-512 (LPKL…LLLP). Positions 521-547 (ETIQDVERKSAPSSLQEEEMPMKQVQD) are disordered.

Belongs to the major facilitator (TC 2.A.1) superfamily. Organic cation transporter (TC 2.A.1.19) family.

The protein localises to the basolateral cell membrane. The protein resides in the apical cell membrane. It localises to the cell membrane. It catalyses the reaction orotate(out) + L-glutamate(in) = orotate(in) + L-glutamate(out). The catalysed reaction is 3',5'-cyclic GMP(in) = 3',5'-cyclic GMP(out). It carries out the reaction GMP(in) = GMP(out). The enzyme catalyses 2'-deoxyguanosine(in) = 2'-deoxyguanosine(out). It catalyses the reaction GDP(in) = GDP(out). The catalysed reaction is guanosine(in) = guanosine(out). It carries out the reaction GTP(in) = GTP(out). The enzyme catalyses 3',5'-cyclic AMP(in) = 3',5'-cyclic AMP(out). It catalyses the reaction creatinine(in) = creatinine(out). The catalysed reaction is prostaglandin E2(out) = prostaglandin E2(in). It carries out the reaction 2-oxoglutarate(in) = 2-oxoglutarate(out). The enzyme catalyses glutarate(in) = glutarate(out). It catalyses the reaction urate(out) = urate(in). The catalysed reaction is estrone 3-sulfate(out) = estrone 3-sulfate(in). Functionally, functions as a Na(+)-independent bidirectional multispecific transporter. Contributes to the renal and hepatic elimination of endogenous organic compounds from the systemic circulation into the urine and bile, respectively. Capable of transporting a wide range of purine and pyrimidine nucleobases, nucleosides and nucleotides, with cGMP, 2'deoxyguanosine and GMP being the preferred substrates. Functions as a pH- and chloride-independent cGMP bidirectional facilitative transporter that can regulate both intracellular and extracellular levels of cGMP and may be involved in cGMP signaling pathways. Mediates orotate/glutamate bidirectional exchange and most likely display a physiological role in hepatic release of glutamate into the blood. Involved in renal secretion and possible reabsorption of creatinine. Able to uptake prostaglandin E2 (PGE2) and may contribute to PGE2 renal excretion. Also transports alpha-ketoglutarate and urate. Apart from the orotate/glutamate exchange, the counterions for the uptake of other SLC22A7/OAT2 substrates remain to be identified. This Sus scrofa (Pig) protein is Solute carrier family 22 member 7 (SLC22A7).